The primary structure comprises 601 residues: Vesicular glutamate transporter 3 (601 aa).

Over 1 to 89 (MPFKAFDTFK…CSCCGIPKRY (89 aa)) the chain is Cytoplasmic. The helical transmembrane segment at 90 to 110 (IIAVMSGLGFCISFGIRCNLG) threads the bilayer. Topologically, residues 111–143 (VAIVEMVNNSTVYVDGKPEIQTAQFNWDPETVG) are vesicular. Asparagine 119 carries an N-linked (GlcNAc...) asparagine glycan. Residues 144–164 (LIHGSFFWGYIVTQIPGGFIS) traverse the membrane as a helical segment. Topologically, residues 165–166 (NK) are cytoplasmic. A helical membrane pass occupies residues 167–187 (FAASRVFGAAIFLTSTLNMFI). Residues 188-195 (PSAARVHY) are Vesicular-facing. Residues 196 to 216 (GCVMGVRILQGLVEGVTYPAC) form a helical membrane-spanning segment. Topologically, residues 217–234 (HGMWSKWAPPLERSRLAT) are cytoplasmic. A helical membrane pass occupies residues 235 to 255 (TSFCGSYAGAVVAMPLAGVLV). Residues 256 to 262 (QYIGWAS) are Vesicular-facing. The helical transmembrane segment at 263-283 (VFYIYGMFGIIWYMFWLLQAY) threads the bilayer. The Cytoplasmic segment spans residues 284 to 327 (ECPAAHPTISNAERTYIETSIGEGANLASLSKFNTPWRRFFTSL). Residues 328 to 348 (PVYAIIVANFCRSWTFYLLLI) traverse the membrane as a helical segment. At 349-366 (SQPAYFEEVFGFAISKVG) the chain is on the vesicular side. A helical membrane pass occupies residues 367–387 (LLSAVPHMVMTIVVPIGGQLA). At 388–403 (DYLRSRKILTTTAVRK) the chain is on the cytoplasmic side. The helical transmembrane segment at 404-424 (IMNCGGFGMEATLLLVVGFSH) threads the bilayer. The Vesicular segment spans residues 425 to 426 (TK). A helical membrane pass occupies residues 427–447 (GVAISFLVLAVGFSGFAISGF). The Cytoplasmic segment spans residues 448–460 (NVNHLDIAPRYAS). A helical transmembrane segment spans residues 461–481 (ILMGISNGVGTLSGMVCPLIV). Over 482 to 494 (GAMTKHKTREEWQ) the chain is Vesicular. Residues 495 to 515 (NVFLIAALVHYSGVIFYGVFA) traverse the membrane as a helical segment. Residues 516–598 (SGEKQDWADP…LSYQAEGDFS (83 aa)) are Cytoplasmic-facing. Residues 576-601 (RQQRESAFDGEEPLSYQAEGDFSETS) are disordered.

It belongs to the major facilitator superfamily. Sodium/anion cotransporter family. VGLUT subfamily. In terms of tissue distribution, expressed in restricted areas of the brain. Highest expression is found in the neurons of the basal forebrain, the hippocampal formation, and the majority of the neurons of the mesencephalic raphe nuclei. Expressed in inner hair cells of the ear.

The protein localises to the cytoplasmic vesicle. The protein resides in the secretory vesicle. It localises to the synaptic vesicle membrane. Its subcellular location is the cell membrane. It is found in the synapse. The protein localises to the synaptosome. It carries out the reaction L-glutamate(out) = L-glutamate(in). The catalysed reaction is 3 Na(+)(out) + phosphate(out) = 3 Na(+)(in) + phosphate(in). The enzyme catalyses chloride(in) = chloride(out). The L-glutamate uniporter activity exhibits a biphasic dependence on chloride concentration. Chloride channel activity is allosterically activated by lumenal H(+) and Cl(-) leading to synaptic vesicles acidification. The L-glutamate transport activity is allosterically activated by lumenal H(+) and Cl(-), preventing non-vesicular L-glutamate release. Its function is as follows. Multifunctional transporter that transports L-glutamate as well as multiple ions such as chloride, sodium and phosphate. At the synaptic vesicle membrane, mainly functions as an uniporter that mediates the uptake of L-glutamate into synaptic vesicles at presynaptic nerve terminals of excitatory neural cells. The L-glutamate uniporter activity is electrogenic and is driven by the proton electrochemical gradient, mainly by the electrical gradient established by the vacuolar H(+)-ATPase across the synaptic vesicle membrane. In addition, functions as a chloride channel that allows a chloride permeation through the synaptic vesicle membrane that affects the proton electrochemical gradient and promotes synaptic vesicles acidification. At the plasma membrane, following exocytosis, functions as a symporter of Na(+) and phosphate from the extracellular space to the cytoplasm allowing synaptic phosphate homeostasis regulation. The symporter activity is electrogenic. Moreover, operates synergistically with SLC18A3/VACHT under a constant H(+) gradient, thereby allowing striatal vesicular acetylcholine uptake. The sequence is that of Vesicular glutamate transporter 3 from Mus musculus (Mouse).